Reading from the N-terminus, the 565-residue chain is Coiled-coil domain-containing protein 17 (565 aa).

The segment at 58–87 is disordered; it reads IMAQEKSRDQEASTSALKRLTEETAGSPGE. Coiled coils occupy residues 97-160 and 219-271; these read ARRM…TLGA and LQLQ…KVLS.

This is Coiled-coil domain-containing protein 17 (Ccdc17) from Mus musculus (Mouse).